The chain runs to 256 residues: Probable ABC transporter ATP-binding protein SPy_0285/M5005_Spy0242 (256 aa).

The ABC transporter domain maps to 4-246 (LEINNLHVSI…EKEGYAGIAQ (243 aa)). 36-43 (GPNGTGKS) is an ATP binding site.

Belongs to the ABC transporter superfamily. Ycf16 family.

The protein resides in the cell membrane. The sequence is that of Probable ABC transporter ATP-binding protein SPy_0285/M5005_Spy0242 from Streptococcus pyogenes serotype M1.